The primary structure comprises 265 residues: Protein B8 (265 aa).

In Homo sapiens (Human), this protein is Protein B8 (B8).